A 229-amino-acid chain; its full sequence is Orotate phosphoribosyltransferase (229 aa).

Residues Arg-107, Lys-108, Lys-111, His-113, and 133–141 (EDLTTAGGS) each bind 5-phospho-alpha-D-ribose 1-diphosphate. An orotate-binding site is contributed by Thr-137.

This sequence belongs to the purine/pyrimidine phosphoribosyltransferase family. PyrE subfamily. Homodimer. Mg(2+) is required as a cofactor.

It carries out the reaction orotidine 5'-phosphate + diphosphate = orotate + 5-phospho-alpha-D-ribose 1-diphosphate. It functions in the pathway pyrimidine metabolism; UMP biosynthesis via de novo pathway; UMP from orotate: step 1/2. In terms of biological role, catalyzes the transfer of a ribosyl phosphate group from 5-phosphoribose 1-diphosphate to orotate, leading to the formation of orotidine monophosphate (OMP). This chain is Orotate phosphoribosyltransferase, found in Rhizobium etli (strain CIAT 652).